Consider the following 412-residue polypeptide: Phosphoglycerate kinase (412 aa).

14 residues coordinate (2R)-3-phosphoglycerate: V20, D21, F22, N23, Q35, R36, S59, H60, G62, R63, L118, R119, H166, and R167. Position 210 (G210) interacts with ADP. A CDP-binding site is contributed by G210. 2 residues coordinate AMP: A211 and K212. Residue A211 participates in ATP binding. Mg(2+) is bound at residue A211. Mg(2+) contacts are provided by A214 and D215. D215 provides a ligand contact to CDP. K216 lines the AMP pocket. An ATP-binding site is contributed by K216. G234 contributes to the ADP binding site. G234 is a CDP binding site. AMP is bound by residues G235 and G308. Residues G235 and G308 each coordinate ATP. G333 and F338 together coordinate CDP. F338 provides a ligand contact to ADP. Position 339 (E339) interacts with AMP. Residues E339, D370, and T371 each coordinate ATP. D370 contacts Mg(2+).

Belongs to the phosphoglycerate kinase family. As to quaternary structure, monomer. Mg(2+) serves as cofactor.

The protein resides in the cytoplasm. It catalyses the reaction (2R)-3-phosphoglycerate + ATP = (2R)-3-phospho-glyceroyl phosphate + ADP. The protein operates within carbohydrate degradation; glycolysis; pyruvate from D-glyceraldehyde 3-phosphate: step 2/5. Its function is as follows. Catalyzes one of the two ATP producing reactions in the glycolytic pathway via the reversible conversion of 1,3-diphosphoglycerate to 3-phosphoglycerate. In addition to its role as a glycolytic enzyme, it seems that PGK-1 acts as a polymerase alpha cofactor protein (primer recognition protein). May play a role in sperm motility. The sequence is that of Phosphoglycerate kinase (PGK) from Aplysia californica (California sea hare).